Consider the following 385-residue polypeptide: MLTVKQIEAAKPKEKPYRLLDGNGLYLYVPVSGKKVWQLRYKIDGKEKILTVGKYPLMTLQEARDKAWTARKDISVGIDPVKAKKASSNNNSFSAIYKEWYEHKKQVWSVGYATELAKMFDDDILPIIGGLEIQDIEPMQLLEVIRRFEDRGAMERANKARRRCGEVFRYAIVTGRAKYNPAPDLADAMKGYRKKNFPFLPADQIPAFNKALATFSGSIVSLIATKVLRYTALRTKELRSMLWKNVDFENRIITIDASVMKGRKIHVVPMSDQVVELLTTLSSITKPVSEFVFAGRNDKKKPICENAVLLVIKQIGYEGLESGHGFRHEFSTIMNEHEWPADAIEVQLAHANGGSVRGIYNHAQYLDKRREMMQWWADWLDEKVE.

Residues 91 to 172 form the Core-binding (CB) domain; that stretch reads NSFSAIYKEW…RCGEVFRYAI (82 aa). One can recognise a Tyr recombinase domain in the interval 195–373; that stretch reads KNFPFLPADQ…QYLDKRREMM (179 aa). Residues Arg-234, Lys-261, His-324, Arg-327, and His-350 contribute to the active site. Tyr-360 acts as the O-(3'-phospho-DNA)-tyrosine intermediate in catalysis.

This sequence belongs to the 'phage' integrase family.

In terms of biological role, integrase is necessary for integration of the phage into the host genome by site-specific recombination. In conjunction with excisionase, integrase is also necessary for excision of the prophage from the host genome. This chain is Prophage integrase IntS (intS), found in Escherichia coli (strain K12).